Consider the following 491-residue polypeptide: MSLDKQIPIIYDFGENYEKNKDIWRRQCIYQILTDRFALDDHCTTAPSTGRMYLGGTWRGIIQKLDYIQSLGCTAVWISPIVKNIEGVTGYGEAYHGYWAEDLTQLNPHFGTKQDLTELVDQLHKRNMLCMIDIVVNHMAHAGDSPIDYSKYAPFNSPSHYHPKRFLHNYDDTWDCEIAWLGDEVVSLMDIRTEDQEVHNFFQNWIRDLIQTYHFDGLRIDTAKHVQKEFYPPFIAAANVFAFGEVYHGDPKFIAKYLEYIPSAANYPLYYQIENTFFPPKQSMNIFYQKAILEARATSMDTTILGNFTENHDVPRFLNRSTDYSLLCNTLTLLLFTDGIPIIFQGQEQMYAGGHDPENRDALWTSNYNQQNPIFQFLKKLIKLRQFLVDNVSGFTTELSNMLFVNEHVYVFRRPGVIIVVSNAGSNSDVDTSAEFSITERESLEFIDVLSGSQFSSLPTEDSSTISMNLEFSFPRVLVHRGLFHSMNELA.

Tryptophan 99 provides a ligand contact to substrate. Ca(2+) is bound at residue asparagine 137. A substrate-binding site is contributed by histidine 138. Residues glutamate 177 and aspartate 190 each coordinate Ca(2+). Arginine 219 contacts substrate. Ca(2+) contacts are provided by aspartate 221, histidine 225, and glutamate 245. Aspartate 221 (nucleophile) is an active-site residue. 224 to 225 (KH) contributes to the substrate binding site. Glutamate 245 acts as the Proton donor in catalysis. 3 residues coordinate substrate: glycine 249, histidine 312, and arginine 360.

The protein belongs to the glycosyl hydrolase 13 family. Ca(2+) is required as a cofactor.

It is found in the cytoplasm. Its subcellular location is the nucleus. This is an uncharacterized protein from Schizosaccharomyces pombe (strain 972 / ATCC 24843) (Fission yeast).